We begin with the raw amino-acid sequence, 269 residues long: Eukaryotic translation initiation factor 3 subunit G-1 (269 aa).

One can recognise an RRM domain in the interval 188-266; that stretch reads AAIRISNLSE…LILSVEWSKP (79 aa). Residue S198 is modified to Phosphoserine.

It belongs to the eIF-3 subunit G family. Component of the eukaryotic translation initiation factor 3 (eIF-3) complex. The eIF-3 complex interacts with pix.

Its subcellular location is the cytoplasm. Its function is as follows. RNA-binding component of the eukaryotic translation initiation factor 3 (eIF-3) complex, which is involved in protein synthesis of a specialized repertoire of mRNAs and, together with other initiation factors, stimulates binding of mRNA and methionyl-tRNAi to the 40S ribosome. The eIF-3 complex specifically targets and initiates translation of a subset of mRNAs involved in cell proliferation. This subunit can bind 18S rRNA. The protein is Eukaryotic translation initiation factor 3 subunit G-1 of Drosophila melanogaster (Fruit fly).